Consider the following 212-residue polypeptide: Uridine kinase (212 aa).

Position 13–20 (13–20 (GASASGKS)) interacts with ATP.

It belongs to the uridine kinase family.

It localises to the cytoplasm. The catalysed reaction is uridine + ATP = UMP + ADP + H(+). The enzyme catalyses cytidine + ATP = CMP + ADP + H(+). It functions in the pathway pyrimidine metabolism; CTP biosynthesis via salvage pathway; CTP from cytidine: step 1/3. The protein operates within pyrimidine metabolism; UMP biosynthesis via salvage pathway; UMP from uridine: step 1/1. In Shewanella putrefaciens (strain CN-32 / ATCC BAA-453), this protein is Uridine kinase.